Here is a 260-residue protein sequence, read N- to C-terminus: Endomucin (260 aa).

Positions methionine 1 to serine 18 are cleaved as a signal peptide. N-linked (GlcNAc...) asparagine glycosylation is found at asparagine 19, asparagine 28, asparagine 97, and asparagine 103. Residues asparagine 19–serine 189 lie on the Extracellular side of the membrane. 2 stretches are compositionally biased toward polar residues: residues glutamine 119–threonine 133 and alanine 145–isoleucine 170. The interval glutamine 119–alanine 182 is disordered. Asparagine 163 and asparagine 177 each carry an N-linked (GlcNAc...) asparagine glycan. A helical membrane pass occupies residues isoleucine 190 to glycine 210. The Cytoplasmic segment spans residues leucine 211–asparagine 260. Position 236 is a phosphoserine (serine 236).

In terms of processing, highly O-glycosylated. Sialic acid-rich glycoprotein.

It localises to the membrane. Functionally, endothelial sialomucin, also called endomucin or mucin-like sialoglycoprotein, which interferes with the assembly of focal adhesion complexes and inhibits interaction between cells and the extracellular matrix. This Pongo abelii (Sumatran orangutan) protein is Endomucin (EMCN).